The sequence spans 424 residues: Enolase (424 aa).

Gln-165 provides a ligand contact to (2R)-2-phosphoglycerate. Glu-207 acts as the Proton donor in catalysis. Mg(2+)-binding residues include Asp-244, Glu-283, and Asp-310. Residues Lys-335, Arg-364, Ser-365, and Lys-386 each contribute to the (2R)-2-phosphoglycerate site. Lys-335 serves as the catalytic Proton acceptor.

Belongs to the enolase family. It depends on Mg(2+) as a cofactor.

The protein resides in the cytoplasm. It is found in the secreted. It localises to the cell surface. The catalysed reaction is (2R)-2-phosphoglycerate = phosphoenolpyruvate + H2O. It participates in carbohydrate degradation; glycolysis; pyruvate from D-glyceraldehyde 3-phosphate: step 4/5. Functionally, catalyzes the reversible conversion of 2-phosphoglycerate (2-PG) into phosphoenolpyruvate (PEP). It is essential for the degradation of carbohydrates via glycolysis. This is Enolase from Chlamydia felis (strain Fe/C-56) (Chlamydophila felis).